Consider the following 482-residue polypeptide: uncharacterized protein (482 aa).

WD repeat units lie at residues 92-133 (DMPN…REPI) and 191-230 (GHEHNIPCITFNSSGTLLLSGSIDRSLQIWDITSLSCLCK).

The protein localises to the cytoplasm. It is found in the nucleus. This is an uncharacterized protein from Schizosaccharomyces pombe (strain 972 / ATCC 24843) (Fission yeast).